The primary structure comprises 218 residues: Guanylate kinase (218 aa).

A Guanylate kinase-like domain is found at 14–193; it reads GLMLVLSSPS…AFAEVRGIVV (180 aa). 21 to 28 contributes to the ATP binding site; it reads SPSGAGKS.

Belongs to the guanylate kinase family.

It localises to the cytoplasm. The catalysed reaction is GMP + ATP = GDP + ADP. Its function is as follows. Essential for recycling GMP and indirectly, cGMP. This Mesorhizobium japonicum (strain LMG 29417 / CECT 9101 / MAFF 303099) (Mesorhizobium loti (strain MAFF 303099)) protein is Guanylate kinase (gmk).